A 51-amino-acid chain; its full sequence is uncharacterized protein (51 aa).

A disordered region spans residues 1-28 (MQQPQNITTSSISNNNNNNTSLTLQQQQ). Residues 13–47 (SNNNNNNTSLTLQQQQEQLQQLQIKRKRNLMKQLQ) are a coiled coil.

This is an uncharacterized protein from Dictyostelium discoideum (Social amoeba).